Consider the following 142-residue polypeptide: Small ribosomal subunit protein uS12 (142 aa).

The tract at residues 1 to 30 is disordered; sequence MGKTHGMGAARKLKSHRRTQRWADKSYKKS. Over residues 11 to 20 the composition is skewed to basic residues; sequence RKLKSHRRTQ. Basic and acidic residues predominate over residues 21-30; the sequence is RWADKSYKKS. Residue proline 61 is modified to Hydroxyproline.

Belongs to the universal ribosomal protein uS12 family.

The protein is Small ribosomal subunit protein uS12 (RPS23) of Euphorbia esula (Leafy spurge).